We begin with the raw amino-acid sequence, 53 residues long: Mitochondrial sheath formation-associated protein (53 aa).

Mitochondrial intermembrane segments lie at residues 1-6 (MIVLGW) and 1-7 (MIVLGWM). A run of 2 helical transmembrane segments spans residues 7–23 (MLFV…PEAM) and 8–24 (LFVG…EAMP). Cytoplasmic segments follow at residues 24-53 (PPTL…ELLL) and 25-40 (PTLK…ENKA).

As to quaternary structure, interacts with VDAC3. In terms of tissue distribution, testis specific. Detected only in germ cells at the step of spermiogenesis (at protein level). Expressed during the middle steps of spermatid development. Testis specific. Detected only in germ cells at the step of spermiogenesis (at protein level). Expressed in the late steps of spermatid development.

The protein resides in the mitochondrion outer membrane. Regulates sperm development. May be involved in mitochondrial sheath formation. This Mus musculus (Mouse) protein is Mitochondrial sheath formation-associated protein.